The sequence spans 330 residues: Tetraacyldisaccharide 4'-kinase (330 aa).

Position 58–65 (58–65) interacts with ATP; it reads TVGGSGKT.

It belongs to the LpxK family.

It carries out the reaction a lipid A disaccharide + ATP = a lipid IVA + ADP + H(+). Its pathway is glycolipid biosynthesis; lipid IV(A) biosynthesis; lipid IV(A) from (3R)-3-hydroxytetradecanoyl-[acyl-carrier-protein] and UDP-N-acetyl-alpha-D-glucosamine: step 6/6. In terms of biological role, transfers the gamma-phosphate of ATP to the 4'-position of a tetraacyldisaccharide 1-phosphate intermediate (termed DS-1-P) to form tetraacyldisaccharide 1,4'-bis-phosphate (lipid IVA). This chain is Tetraacyldisaccharide 4'-kinase, found in Shewanella halifaxensis (strain HAW-EB4).